The sequence spans 336 residues: MAATMYYDRDVSLSPIEDKLIAIIGYGSQAHAHAQNLRDSGLNVVVGLREGSPSRPKAEQAGLRVTSIEDATREADVIMLLIPDETQPKVYEESIAPNLTAGKALAFGHGFNIHFGRIKPPADVDVFLVAPKGPGHMLRRVYVDGAGMPSIFAVGQDASGNARDLALAYARGIGGTRAGVLETTFKEETETDLFGEQSVLCGGVTHLIQAGFETLVEAGYQPEIAYFETLHEVKLIVDLIYEKGFEGMRHSISNTAEYGDYVTGPRIITDETKATMKDVLSDIQSGKFARDFIHEAESGFPFMKEQRQKMRHHTLEVVGRELRSKMPFISKQELEV.

In terms of domain architecture, KARI N-terminal Rossmann spans 3-183 (ATMYYDRDVS…GGTRAGVLET (181 aa)). Residues 26 to 29 (YGSQ), arginine 49, serine 52, serine 54, and 84 to 87 (DETQ) contribute to the NADP(+) site. Histidine 109 is an active-site residue. Position 135 (glycine 135) interacts with NADP(+). The KARI C-terminal knotted domain maps to 184–329 (TFKEETETDL…RELRSKMPFI (146 aa)). Residues aspartate 192, glutamate 196, glutamate 228, and glutamate 232 each coordinate Mg(2+). Serine 253 contacts substrate.

This sequence belongs to the ketol-acid reductoisomerase family. It depends on Mg(2+) as a cofactor.

The catalysed reaction is (2R)-2,3-dihydroxy-3-methylbutanoate + NADP(+) = (2S)-2-acetolactate + NADPH + H(+). It carries out the reaction (2R,3R)-2,3-dihydroxy-3-methylpentanoate + NADP(+) = (S)-2-ethyl-2-hydroxy-3-oxobutanoate + NADPH + H(+). It participates in amino-acid biosynthesis; L-isoleucine biosynthesis; L-isoleucine from 2-oxobutanoate: step 2/4. It functions in the pathway amino-acid biosynthesis; L-valine biosynthesis; L-valine from pyruvate: step 2/4. Functionally, involved in the biosynthesis of branched-chain amino acids (BCAA). Catalyzes an alkyl-migration followed by a ketol-acid reduction of (S)-2-acetolactate (S2AL) to yield (R)-2,3-dihydroxy-isovalerate. In the isomerase reaction, S2AL is rearranged via a Mg-dependent methyl migration to produce 3-hydroxy-3-methyl-2-ketobutyrate (HMKB). In the reductase reaction, this 2-ketoacid undergoes a metal-dependent reduction by NADPH to yield (R)-2,3-dihydroxy-isovalerate. The chain is Ketol-acid reductoisomerase (NADP(+)) from Deinococcus geothermalis (strain DSM 11300 / CIP 105573 / AG-3a).